Reading from the N-terminus, the 83-residue chain is Weak toxin DE-1 homolog 1 (83 aa).

The signal sequence occupies residues 1–21; sequence MKPVLLTLVVVTIVCLDLGYT. Cystine bridges form between C24-C45, C38-C62, C64-C75, and C76-C81.

This sequence belongs to the three-finger toxin family. Short-chain subfamily. Type I alpha-neurotoxin sub-subfamily. As to expression, expressed by the venom gland.

The protein localises to the secreted. In terms of biological role, binds to muscle nicotinic acetylcholine receptor (nAChR) and inhibit acetylcholine from binding to the receptor, thereby impairing neuromuscular transmission. The sequence is that of Weak toxin DE-1 homolog 1 from Ophiophagus hannah (King cobra).